The sequence spans 244 residues: Eukaryotic translation initiation factor 6 (244 aa).

Serine 174 and serine 175 each carry phosphoserine; by CK1.

This sequence belongs to the eIF-6 family. As to quaternary structure, monomer. Associates with the 60S ribosomal subunit. Phosphorylation at Ser-174 and Ser-175 promotes nuclear export.

The protein localises to the cytoplasm. It localises to the nucleus. Its subcellular location is the nucleolus. In terms of biological role, binds to the 60S ribosomal subunit and prevents its association with the 40S ribosomal subunit to form the 80S initiation complex in the cytoplasm. Is also involved in ribosome biogenesis. Associates with pre-60S subunits in the nucleus and is involved in its nuclear export. In Schizosaccharomyces pombe (strain 972 / ATCC 24843) (Fission yeast), this protein is Eukaryotic translation initiation factor 6 (tif6).